Consider the following 189-residue polypeptide: Interferon alpha-12 (189 aa).

Residues 1–23 form the signal peptide; it reads MARLCAFLMTLLVMSYWSTCSLG. 2 cysteine pairs are disulfide-bonded: Cys24–Cys122 and Cys52–Cys162. Asn101 carries N-linked (GlcNAc...) asparagine glycosylation.

It belongs to the alpha/beta interferon family.

Its subcellular location is the secreted. Produced by macrophages, IFN-alpha have antiviral activities. Interferon stimulates the production of two enzymes: a protein kinase and an oligoadenylate synthetase. The sequence is that of Interferon alpha-12 (Ifna12) from Mus musculus (Mouse).